The following is a 167-amino-acid chain: S-ribosylhomocysteine lyase (167 aa).

Fe cation-binding residues include H54, H58, and C128.

The protein belongs to the LuxS family. As to quaternary structure, homodimer. Requires Fe cation as cofactor.

It carries out the reaction S-(5-deoxy-D-ribos-5-yl)-L-homocysteine = (S)-4,5-dihydroxypentane-2,3-dione + L-homocysteine. In terms of biological role, involved in the synthesis of autoinducer 2 (AI-2) which is secreted by bacteria and is used to communicate both the cell density and the metabolic potential of the environment. The regulation of gene expression in response to changes in cell density is called quorum sensing. Catalyzes the transformation of S-ribosylhomocysteine (RHC) to homocysteine (HC) and 4,5-dihydroxy-2,3-pentadione (DPD). This is S-ribosylhomocysteine lyase from Haemophilus influenzae (strain 86-028NP).